The primary structure comprises 93 residues: DNA/RNA-binding protein Alba 2 (93 aa).

It belongs to the histone-like Alba family.

It is found in the cytoplasm. Its subcellular location is the chromosome. Binds double-stranded DNA tightly but without sequence specificity. Involved in DNA compaction. The protein is DNA/RNA-binding protein Alba 2 of Methanopyrus kandleri (strain AV19 / DSM 6324 / JCM 9639 / NBRC 100938).